We begin with the raw amino-acid sequence, 472 residues long: MSLSRRQFIQASGIALCAGAMPLTARADGGKNPLPVPPLLESRRGQPVFLTMQRAHWSFSGERKNPVWGFNGRYLGPTVRVFSNDDVKLIYSNRLNEPVSMTVSGLQVPGSLMGGAGRMIQPNMDWSPVLPVRQAAATCWYHANTPNRMAPHVYNGLAGLWLVEDSLSKSLPIPNHYGVDDFPLIIQDKRLDNFGAPLYNPPSSGGFMGDTLLVNGARNPYVEVSRGWVRLRLLNASNARRYVMRMSDGRPLHLIANDQGFLPAPMALNQMSLAPGERREVLVDMSQGNEATLTAGESASIMQRLRGLFEPSNILVSSAILTLRPTGLLPLVTNTLPMRLLADNIIDGAVSRTREFRLGDSLPGINGAMWDVNRVDVQTQVGRYERWIVHADQPQPFHVQGAAFLVRSVNGGLTPPEDSGWKDTVWVENDVELLVYFGQFSTPQFPFLYYSHTLEMADRGSIAQLVAQASNG.

The segment at residues 1 to 27 (MSLSRRQFIQASGIALCAGAMPLTARA) is a signal peptide (tat-type signal).

This sequence belongs to the FtsP family. Predicted to be exported by the Tat system. The position of the signal peptide cleavage has not been experimentally proven.

It localises to the periplasm. Its function is as follows. Cell division protein that is required for growth during stress conditions. May be involved in protecting or stabilizing the divisomal assembly under conditions of stress. The protein is Cell division protein FtsP of Dickeya dadantii (strain 3937) (Erwinia chrysanthemi (strain 3937)).